A 93-amino-acid polypeptide reads, in one-letter code: Parbolysin P1 (93 aa).

Cystine bridges form between Cys16–Cys37, Cys22–Cys33, and Cys47–Cys60.

The protein belongs to the worm cytolysin family. Localized within the skin and proboscis and are most readily isolated from body mucus secretions.

It is found in the secreted. Its function is as follows. Cytolysin that shows hemolytic activity (on bovine erythrocytes, HC(50)=5.75 mg/ml). This hemolytic activity is completely inhibited by small unilamelar vesicles composed of PC/PG, PC/PI and PC/PS in 1:1 molar ratios (with at least 100 mg/ml concentration). The recombinant protein does not show hemolytic activity, suggesting that it is not properly folded or that it requires a free N-terminal end for its activity. This Parborlasia corrugatus (Antarctic nemertean worm) protein is Parbolysin P1.